A 502-amino-acid polypeptide reads, in one-letter code: Neuronal acetylcholine receptor subunit alpha-7 (502 aa).

The signal sequence occupies residues 1-22 (MCGGRGGIWLALAAALLHVSLQ). At 23 to 233 (GEFQRRLYKE…VTMRRRTLYY (211 aa)) the chain is on the extracellular side. Residues Arg42 and Val44 each coordinate Ca(2+). Asn46, Asn90, and Asn133 each carry an N-linked (GlcNAc...) asparagine glycan. A disulfide bond links Cys150 and Cys164. 2 residues coordinate Ca(2+): Ser172 and Tyr210. Cys212 and Cys213 are oxidised to a cystine. The next 3 helical transmembrane spans lie at 234 to 254 (GLNLLIPCVLISALALLVFLL), 262 to 282 (ISLGITVLLSLTVFMLLVAEI), and 295 to 315 (QYFASTMIIVGLSVVVTVIVL). The segment at 260 to 267 (EKISLGIT) is essential for TMEM35A/NACHO-mediated proper subunit assembly and trafficking to cell membrane. Topologically, residues 316 to 469 (RYHHHDPDGG…WKFAACVVDR (154 aa)) are cytoplasmic. Residues 470–490 (LCLMAFSVFTIICTIGILMSA) traverse the membrane as a helical segment.

This sequence belongs to the ligand-gated ion channel (TC 1.A.9) family. Acetylcholine receptor (TC 1.A.9.1) subfamily. Alpha-7/CHRNA7 sub-subfamily. Homopentamer. Can also form heteropentamers with CHRNB2, mainly found in basal forebrain cholinergic neurons. Interacts with RIC3; which is required for proper folding and assembly. Interacts with LYPD6. Interacts with CANX. Glycosylations at Asn-46, Asn-90 and Asn-133 are essential for TMEM35A/NACHO-mediated proper subunit assembly and trafficking to the cell membrane. In terms of tissue distribution, expressed in neurons. Expressed in umbrella cells of urothelium (at protein level).

It localises to the postsynaptic cell membrane. The protein localises to the cell membrane. The enzyme catalyses Ca(2+)(in) = Ca(2+)(out). It carries out the reaction K(+)(in) = K(+)(out). It catalyses the reaction Na(+)(in) = Na(+)(out). The catalysed reaction is choline(out) = choline(in). The enzyme catalyses NH4(+)(in) = NH4(+)(out). It carries out the reaction L-arginine(in) = L-arginine(out). It catalyses the reaction guanidine(out) = guanidine(in). With respect to regulation, activated by a myriad of ligands such as acetylcholine, cytisine, nicotine, choline and epibatidine. Oligomeric amyloid-beta protein 42 activates specifially CHRNA7:CHRNB2 nAchRs. Activity is modulated by positive allosteric modulators (PAMs), such as flavonoids, with a wide range of chemical diversity, pharmacological sensitivity and efficacy. AChR activity is inhibited by the antagonists alpha-conotoxons RgIA, ImI and ImII, small disulfide-constrained peptides from cone snails. Alpha-conotoxin PnIC selectively inhibits CHRNA7:CHRNB2 over CHRNA7 homopentamer. Its function is as follows. Component of neuronal acetylcholine receptors (nAChRs) that function as pentameric, ligand-gated cation channels with high calcium permeability among other activities. nAChRs are excitatory neurotrasnmitter receptors formed by a collection of nAChR subunits known to mediate synaptic transmission in the nervous system and the neuromuscular junction. Each nAchR subunit confers differential attributes to channel properties, including activation, deactivation and desensitization kinetics, pH sensitivity, cation permeability, and binding to allosteric modulators. CHRNA7 forms homopentameric neuronal acetylcholine receptors abundantly expressed in the central nervous system, characterized by fast desensitization and high calcium permeability. Also forms heteropentamers with CHRNB2, mainly expressed in basal forebrain cholinergic neurons. Involved in the modulation of calcium-dependent signaling pathways and influences the release of neurotransmitters, including dopamine, glutamate and GABA. Also expressed in non-neuronal cells such as immune cells like lymphocytes, monocytes and macrophages. In T cells, activation induces metabotropic signaling that results in an increase of intracellular Ca2+ concentrations, independent of ionotropic receptor functions. In macrophages, required for acetylcholine-mediated inhibition of TNF and other inflammatory cytokine release. Once activated by acetylcholine, nicotine or other agonists, selectively inhibits production of pro-inflammatory cytokines while leaving anti-inflammatory cytokines undisturbed. Stimulates the cholinergic anti-inflammatory pathway, controlling inflammation by inhibiting NFKB nuclear translocation and activating the JAK2-STAT3 pathway, independently of ion channel activity. Also expressed in the urothelium where it modulates reflex bladder activity by increasing intracellular calcium through internal stores and decreasing basal ATP release. This chain is Neuronal acetylcholine receptor subunit alpha-7 (Chrna7), found in Rattus norvegicus (Rat).